The chain runs to 95 residues: Putative regulatory protein Pmob_0099 (95 aa).

This sequence belongs to the RemA family.

The chain is Putative regulatory protein Pmob_0099 from Petrotoga mobilis (strain DSM 10674 / SJ95).